We begin with the raw amino-acid sequence, 179 residues long: Large ribosomal subunit protein uL5 (179 aa).

The protein belongs to the universal ribosomal protein uL5 family. As to quaternary structure, part of the 50S ribosomal subunit; part of the 5S rRNA/L5/L18/L25 subcomplex. Contacts the 5S rRNA and the P site tRNA. Forms a bridge to the 30S subunit in the 70S ribosome.

In terms of biological role, this is one of the proteins that bind and probably mediate the attachment of the 5S RNA into the large ribosomal subunit, where it forms part of the central protuberance. In the 70S ribosome it contacts protein S13 of the 30S subunit (bridge B1b), connecting the 2 subunits; this bridge is implicated in subunit movement. Contacts the P site tRNA; the 5S rRNA and some of its associated proteins might help stabilize positioning of ribosome-bound tRNAs. The sequence is that of Large ribosomal subunit protein uL5 from Neisseria meningitidis serogroup A / serotype 4A (strain DSM 15465 / Z2491).